The chain runs to 188 residues: Peptidyl-tRNA hydrolase (188 aa).

Residue tyrosine 18 coordinates tRNA. Residue histidine 23 is the Proton acceptor of the active site. Positions 67, 69, and 115 each coordinate tRNA.

It belongs to the PTH family. In terms of assembly, monomer.

It localises to the cytoplasm. It carries out the reaction an N-acyl-L-alpha-aminoacyl-tRNA + H2O = an N-acyl-L-amino acid + a tRNA + H(+). Hydrolyzes ribosome-free peptidyl-tRNAs (with 1 or more amino acids incorporated), which drop off the ribosome during protein synthesis, or as a result of ribosome stalling. Functionally, catalyzes the release of premature peptidyl moieties from peptidyl-tRNA molecules trapped in stalled 50S ribosomal subunits, and thus maintains levels of free tRNAs and 50S ribosomes. This chain is Peptidyl-tRNA hydrolase, found in Salinibacter ruber (strain DSM 13855 / M31).